Consider the following 321-residue polypeptide: Phospho-N-acetylmuramoyl-pentapeptide-transferase (321 aa).

Transmembrane regions (helical) follow at residues 1 to 21 (MIFI…PILI), 50 to 70 (MGGL…IIFV), 76 to 96 (IILL…DDYI), 112 to 132 (FLAQ…FHLV), 140 to 160 (IPFV…IVFW), 176 to 196 (GLAT…SYML), 200 to 220 (AIGI…PYNL), 225 to 245 (VFMG…ISIM), 250 to 270 (LSLI…MLQV), and 300 to 320 (VVTV…WIGV).

This sequence belongs to the glycosyltransferase 4 family. MraY subfamily. The cofactor is Mg(2+).

The protein resides in the cell membrane. It carries out the reaction UDP-N-acetyl-alpha-D-muramoyl-L-alanyl-gamma-D-glutamyl-L-lysyl-D-alanyl-D-alanine + di-trans,octa-cis-undecaprenyl phosphate = Mur2Ac(oyl-L-Ala-gamma-D-Glu-L-Lys-D-Ala-D-Ala)-di-trans,octa-cis-undecaprenyl diphosphate + UMP. It participates in cell wall biogenesis; peptidoglycan biosynthesis. In terms of biological role, catalyzes the initial step of the lipid cycle reactions in the biosynthesis of the cell wall peptidoglycan: transfers peptidoglycan precursor phospho-MurNAc-pentapeptide from UDP-MurNAc-pentapeptide onto the lipid carrier undecaprenyl phosphate, yielding undecaprenyl-pyrophosphoryl-MurNAc-pentapeptide, known as lipid I. This chain is Phospho-N-acetylmuramoyl-pentapeptide-transferase, found in Staphylococcus epidermidis (strain ATCC 35984 / DSM 28319 / BCRC 17069 / CCUG 31568 / BM 3577 / RP62A).